An 842-amino-acid chain; its full sequence is Putative G-type lectin S-receptor-like serine/threonine-protein kinase At1g61610 (842 aa).

An N-terminal signal peptide occupies residues 1-22 (MAGFNRNLTLVTTLLIFHQLCS). N-linked (GlcNAc...) asparagine glycosylation is found at Asn7, Asn23, Asn35, Asn60, Asn110, Asn123, Asn304, Asn351, and Asn380. Topologically, residues 23-443 (NVSCSTSNSF…KLGGGKENST (421 aa)) are extracellular. Residues 29 to 150 (SNSFTRNHTI…SDRRKWYWES (122 aa)) form the Bulb-type lectin domain. The 40-residue stretch at 292 to 331 (PSTECEKYNRCGNYSVCDDSKEFDSGKCSCIDGFEPVHQD) folds into the EGF-like domain. Disulfide bonds link Cys296-Cys308 and Cys302-Cys319. Residues 350–431 (CNQSLVAGQE…GGNSINIRLA (82 aa)) form the PAN domain. 2 disulfide bridges follow: Cys385–Cys406 and Cys389–Cys395. N-linked (GlcNAc...) asparagine glycosylation occurs at Asn441. A helical transmembrane segment spans residues 444–464 (LWIIVFSVIGAFLLGLCIWIL). Residues 465-842 (WKFKKSLKAF…DVTFTTIVGR (378 aa)) lie on the Cytoplasmic side of the membrane. A Protein kinase domain is found at 525–814 (FAEENKLGQG…PRQPTFHSFL (290 aa)). ATP-binding positions include 531–539 (LGQGGFGTV) and Lys553. Ser559 carries the phosphoserine modification. Residues 614–631 (SKQGSLDWRKRWEVIGGI) form a caM-binding region. Asp650 functions as the Proton acceptor in the catalytic mechanism. Residues Ser654 and Ser667 each carry the phosphoserine modification. Thr684 carries the post-translational modification Phosphothreonine. Phosphoserine is present on residues Ser728 and Ser830. Thr837 bears the Phosphothreonine mark.

Belongs to the protein kinase superfamily. Ser/Thr protein kinase family.

The protein localises to the cell membrane. It catalyses the reaction L-seryl-[protein] + ATP = O-phospho-L-seryl-[protein] + ADP + H(+). The enzyme catalyses L-threonyl-[protein] + ATP = O-phospho-L-threonyl-[protein] + ADP + H(+). In Arabidopsis thaliana (Mouse-ear cress), this protein is Putative G-type lectin S-receptor-like serine/threonine-protein kinase At1g61610.